Here is a 199-residue protein sequence, read N- to C-terminus: Probable GTP-binding protein EngB (199 aa).

One can recognise an EngB-type G domain in the interval 28 to 199; the sequence is DLPEVALAGR…EAWDTILAEL (172 aa). Residues 36-43, 63-67, 81-84, 148-151, and 180-182 contribute to the GTP site; these read GRSNVGKS, GKTQL, DVPG, TKAD, and FSS. Residues Ser43 and Thr65 each coordinate Mg(2+).

This sequence belongs to the TRAFAC class TrmE-Era-EngA-EngB-Septin-like GTPase superfamily. EngB GTPase family. Mg(2+) is required as a cofactor.

Functionally, necessary for normal cell division and for the maintenance of normal septation. This Streptococcus thermophilus (strain CNRZ 1066) protein is Probable GTP-binding protein EngB.